Consider the following 95-residue polypeptide: Class I hydrophobin 13 (95 aa).

Intrachain disulfides connect cysteine 14–cysteine 74, cysteine 21–cysteine 68, cysteine 22–cysteine 55, and cysteine 75–cysteine 88. 2 N-linked (GlcNAc...) asparagine glycosylation sites follow: asparagine 23 and asparagine 77.

This sequence belongs to the fungal hydrophobin family. In terms of assembly, self-assembles to form functional amyloid fibrils called rodlets. Self-assembly into fibrillar rodlets occurs spontaneously at hydrophobic:hydrophilic interfaces and the rodlets further associate laterally to form amphipathic monolayers.

The protein localises to the secreted. It localises to the cell wall. Aerial growth, conidiation, and dispersal of filamentous fungi in the environment rely upon a capability of their secreting small amphipathic proteins called hydrophobins (HPBs) with low sequence identity. Class I can self-assemble into an outermost layer of rodlet bundles on aerial cell surfaces, conferring cellular hydrophobicity that supports fungal growth, development and dispersal; whereas Class II form highly ordered films at water-air interfaces through intermolecular interactions but contribute nothing to the rodlet structure. The sequence is that of Class I hydrophobin 13 from Pleurotus ostreatus (strain PC15) (Oyster mushroom).